The chain runs to 353 residues: MVDTHKLADDVLQLLDNRIEDNYRVCVILVGSPGSGKSTIAEELCQIINEKYHTFLSEHPNVIEVNDRLKPMVNLVDSLKTLQPNEVAEMIENQGLFKDHVEDVNFQPIKYSALTSNNEECTAVVARGGTANAIRIATVDNPVNVNKLAQDSINIAQIVPMDGFHLSRRCLDLFKDPQTAHKRRGSPSTFDSNNFLQLCKILAKTSLCKVSSHHKFYSTSSVFEKLSKTFSQTIPDIFVPGFNHALKDPTPDQYCISKFTRIVILEGLYLLYDQENWKKIYKTLADTGALLVYKIDIDYEATEERVAKRHLQSGLVTTIAEGREKFRSNDLLNGRDIDNHLIKVDNIVHIRND.

ATP is bound at residue 31–39; the sequence is GSPGSGKST.

This sequence belongs to the YFH7 family.

In terms of biological role, ATP-dependent kinase that could be involved in endoplasmic reticulum membrane assembly. The polypeptide is ATP-dependent kinase YFH7 (YFH7) (Saccharomyces cerevisiae (strain RM11-1a) (Baker's yeast)).